A 160-amino-acid chain; its full sequence is Dysbindin domain-containing protein 1 (160 aa).

Phosphoserine is present on residues S3, S97, and S121. The disordered stretch occupies residues 95-160 (ADSDDENLAT…FLTVEEPKED (66 aa)). Residues 127 to 143 (TRAEQNREKQPPSDPER) show a composition bias toward basic and acidic residues.

The protein belongs to the dysbindin family.

This chain is Dysbindin domain-containing protein 1 (Dbndd1), found in Mus musculus (Mouse).